Consider the following 155-residue polypeptide: Small ribosomal subunit protein uS7 (155 aa).

This sequence belongs to the universal ribosomal protein uS7 family. In terms of assembly, part of the 30S ribosomal subunit. Contacts proteins S9 and S11.

One of the primary rRNA binding proteins, it binds directly to 16S rRNA where it nucleates assembly of the head domain of the 30S subunit. Is located at the subunit interface close to the decoding center, probably blocks exit of the E-site tRNA. This is Small ribosomal subunit protein uS7 from Petrotoga mobilis (strain DSM 10674 / SJ95).